A 482-amino-acid chain; its full sequence is U2 small nuclear ribonucleoprotein auxiliary factor 35 kDa subunit-related protein 2 (482 aa).

The disordered stretch occupies residues 1–59 (MAAPEKMTFPEKPSHKKYRAALKKEKRKKRRQELARLRDSGLSQKEEEEDTFIEEQQLE). The segment covering 14–31 (SHKKYRAALKKEKRKKRR) has biased composition (basic residues). Residue lysine 45 forms a Glycyl lysine isopeptide (Lys-Gly) (interchain with G-Cter in SUMO2) linkage. The span at 46–58 (EEEEDTFIEEQQL) shows a compositional bias: acidic residues. Lysine 62 participates in a covalent cross-link: Glycyl lysine isopeptide (Lys-Gly) (interchain with G-Cter in SUMO2). A disordered region spans residues 115-135 (QRKEREEEEQKRQEKKEKEEA). The segment at 166–194 (EKDRANCPFYSKTGACRFGDRCSRKHNFP) adopts a C3H1-type 1 zinc-finger fold. The RRM domain occupies 198–304 (PTLLIKSMFT…RQLQCEFCPV (107 aa)). A C3H1-type 2 zinc finger spans residues 306 to 333 (RWKMAICGLFEIQQCPRGKHCNFLHVFR). Serine 349 bears the Phosphoserine mark. Positions 351-482 (DRTGSSFGKN…DRTVQSPKSK (132 aa)) are disordered. Composition is skewed to basic and acidic residues over residues 360–375 (NSER…DYYS) and 383–398 (PSPD…SERK). Serine 384 is modified (phosphoserine). Residues 399–412 (SSRHRGKKSHKRTS) show a composition bias toward basic residues. The segment covering 413-435 (KSRERHNSRSRGRNRDRSRDRSR) has biased composition (basic and acidic residues). Residues 436–454 (GRGSRSRSRSRSRRSRRSR) are compositionally biased toward basic residues.

As to quaternary structure, component of the U11/U12 snRNPs that are part of the U12-type spliceosome. Interacts (via RS domain) with SRSF1 and SRSF2. Interacts with U2AF2/U2AF65. Post-translationally, phosphorylated in the RS domain by SRPK1. In terms of tissue distribution, widely expressed.

The protein resides in the nucleus. Pre-mRNA-binding protein required for splicing of both U2- and U12-type introns. Selectively interacts with the 3'-splice site of U2- and U12-type pre-mRNAs and promotes different steps in U2 and U12 intron splicing. Recruited to U12 pre-mRNAs in an ATP-dependent manner and is required for assembly of the pre-spliceosome, a precursor to other spliceosomal complexes. For U2-type introns, it is selectively and specifically required for the second step of splicing. The polypeptide is U2 small nuclear ribonucleoprotein auxiliary factor 35 kDa subunit-related protein 2 (ZRSR2) (Homo sapiens (Human)).